A 230-amino-acid chain; its full sequence is MAKEPLIRVLLIEDDPMVQEVNRMFVEKLSGFTIVGTTATGEEGMVKTRELQPDLILLDIFMPKQDGLSFIKQIREQYIDVDIIAVTAANDTKTIKTLLRYGVMDYLVKPFTFERLKAALTQYEEMFRKMQKEAELSQDSLDEMIKQKQAQANMDDLPKGLHAHTLQQVIERLEELDEPKSAEEIGRDVGLARVTVRRYLNYLESVGQVEMDLTYGSIGRPIQTYKLKQG.

In terms of domain architecture, Response regulatory spans 8 to 124; that stretch reads RVLLIEDDPM…RLKAALTQYE (117 aa). At aspartate 59 the chain carries 4-aspartylphosphate. Residues 183-209 constitute a DNA-binding region (H-T-H motif); the sequence is EEIGRDVGLARVTVRRYLNYLESVGQV.

In terms of processing, phosphorylated by DctS.

It localises to the cytoplasm. Functionally, member of the two-component regulatory system DctS/DctR. Essential for expression of DctP. The polypeptide is Probable C4-dicarboxylate response regulator DctR (dctR) (Halalkalibacterium halodurans (strain ATCC BAA-125 / DSM 18197 / FERM 7344 / JCM 9153 / C-125) (Bacillus halodurans)).